The primary structure comprises 445 residues: Phosphoglucosamine mutase (445 aa).

The active-site Phosphoserine intermediate is the S99. S99, D242, D244, and D246 together coordinate Mg(2+). S99 is modified (phosphoserine).

Belongs to the phosphohexose mutase family. Mg(2+) is required as a cofactor. In terms of processing, activated by phosphorylation.

It catalyses the reaction alpha-D-glucosamine 1-phosphate = D-glucosamine 6-phosphate. In terms of biological role, catalyzes the conversion of glucosamine-6-phosphate to glucosamine-1-phosphate. This is Phosphoglucosamine mutase from Campylobacter lari (strain RM2100 / D67 / ATCC BAA-1060).